The sequence spans 82 residues: ATP synthase subunit c (82 aa).

The next 2 membrane-spanning stretches (helical) occupy residues 18-38 (LGEA…IGKI) and 61-81 (IIAA…CGFL).

The protein belongs to the ATPase C chain family. F-type ATPases have 2 components, F(1) - the catalytic core - and F(0) - the membrane proton channel. F(1) has five subunits: alpha(3), beta(3), gamma(1), delta(1), epsilon(1). F(0) has three main subunits: a(1), b(2) and c(10-14). The alpha and beta chains form an alternating ring which encloses part of the gamma chain. F(1) is attached to F(0) by a central stalk formed by the gamma and epsilon chains, while a peripheral stalk is formed by the delta and b chains.

It is found in the cell inner membrane. F(1)F(0) ATP synthase produces ATP from ADP in the presence of a proton or sodium gradient. F-type ATPases consist of two structural domains, F(1) containing the extramembraneous catalytic core and F(0) containing the membrane proton channel, linked together by a central stalk and a peripheral stalk. During catalysis, ATP synthesis in the catalytic domain of F(1) is coupled via a rotary mechanism of the central stalk subunits to proton translocation. In terms of biological role, key component of the F(0) channel; it plays a direct role in translocation across the membrane. A homomeric c-ring of between 10-14 subunits forms the central stalk rotor element with the F(1) delta and epsilon subunits. The sequence is that of ATP synthase subunit c from Azobacteroides pseudotrichonymphae genomovar. CFP2.